We begin with the raw amino-acid sequence, 219 residues long: 2-hydroxy-3-keto-5-methylthiopentenyl-1-phosphate phosphatase (219 aa).

Belongs to the HAD-like hydrolase superfamily. MtnX family.

The enzyme catalyses 2-hydroxy-5-methylsulfanyl-3-oxopent-1-enyl phosphate + H2O = 1,2-dihydroxy-5-(methylsulfanyl)pent-1-en-3-one + phosphate. The protein operates within amino-acid biosynthesis; L-methionine biosynthesis via salvage pathway; L-methionine from S-methyl-5-thio-alpha-D-ribose 1-phosphate: step 4/6. Functionally, dephosphorylates 2-hydroxy-3-keto-5-methylthiopentenyl-1-phosphate (HK-MTPenyl-1-P) yielding 1,2-dihydroxy-3-keto-5-methylthiopentene (DHK-MTPene). The protein is 2-hydroxy-3-keto-5-methylthiopentenyl-1-phosphate phosphatase of Bacillus cereus (strain AH187).